Reading from the N-terminus, the 535-residue chain is Protein PyrBI (535 aa).

Positions 1–341 (MENKFMGRSL…MIAGKIGDDY (341 aa)) are aspartate carbamoyltransferase. Residues 342 to 370 (KGPEPKSCERVEDEDYIVEVPINNSKESK) form a linker region. Residues 371–535 (VETFSEGVRP…FKEIWGEKKN (165 aa)) are aspartate carbamoyltransferase regulatory region. Residues Cys-488, Cys-493, Cys-517, and Cys-520 each contribute to the Zn(2+) site.

In the N-terminal section; belongs to the aspartate/ornithine carbamoyltransferase superfamily. ATCase family. It in the C-terminal section; belongs to the PyrI family.

The catalysed reaction is carbamoyl phosphate + L-aspartate = N-carbamoyl-L-aspartate + phosphate + H(+). Its pathway is pyrimidine metabolism; UMP biosynthesis via de novo pathway; (S)-dihydroorotate from bicarbonate: step 2/3. The sequence is that of Protein PyrBI (pyrBI) from Treponema denticola (strain ATCC 35405 / DSM 14222 / CIP 103919 / JCM 8153 / KCTC 15104).